Reading from the N-terminus, the 120-residue chain is Large ribosomal subunit protein bL20 (120 aa).

Belongs to the bacterial ribosomal protein bL20 family.

In terms of biological role, binds directly to 23S ribosomal RNA and is necessary for the in vitro assembly process of the 50S ribosomal subunit. It is not involved in the protein synthesizing functions of that subunit. This chain is Large ribosomal subunit protein bL20, found in Chlamydia abortus (strain DSM 27085 / S26/3) (Chlamydophila abortus).